The sequence spans 129 residues: Small ribosomal subunit protein uS11 (129 aa).

The protein belongs to the universal ribosomal protein uS11 family. As to quaternary structure, part of the 30S ribosomal subunit. Interacts with proteins S7 and S18. Binds to IF-3.

Its function is as follows. Located on the platform of the 30S subunit, it bridges several disparate RNA helices of the 16S rRNA. Forms part of the Shine-Dalgarno cleft in the 70S ribosome. In Caulobacter sp. (strain K31), this protein is Small ribosomal subunit protein uS11.